Here is a 214-residue protein sequence, read N- to C-terminus: Large ribosomal subunit protein uL3 (214 aa).

N5-methylglutamine is present on Gln153.

The protein belongs to the universal ribosomal protein uL3 family. As to quaternary structure, part of the 50S ribosomal subunit. Forms a cluster with proteins L14 and L19. Methylated by PrmB.

Its function is as follows. One of the primary rRNA binding proteins, it binds directly near the 3'-end of the 23S rRNA, where it nucleates assembly of the 50S subunit. The protein is Large ribosomal subunit protein uL3 of Methylobacillus flagellatus (strain ATCC 51484 / DSM 6875 / VKM B-1610 / KT).